The following is a 340-amino-acid chain: Glyceraldehyde-3-phosphate dehydrogenase, cytosolic (340 aa).

NAD(+) contacts are provided by residues 16-17, D38, and R85; that span reads RI. Residues 156-158, T187, 216-217, and R239 each bind D-glyceraldehyde 3-phosphate; these read SCT and TG. The active-site Nucleophile is the C157. N321 lines the NAD(+) pocket.

This sequence belongs to the glyceraldehyde-3-phosphate dehydrogenase family. Homotetramer.

The protein resides in the cytoplasm. The enzyme catalyses D-glyceraldehyde 3-phosphate + phosphate + NAD(+) = (2R)-3-phospho-glyceroyl phosphate + NADH + H(+). The protein operates within carbohydrate degradation; glycolysis; pyruvate from D-glyceraldehyde 3-phosphate: step 1/5. Its function is as follows. Key enzyme in glycolysis that catalyzes the first step of the pathway by converting D-glyceraldehyde 3-phosphate (G3P) into 3-phospho-D-glyceroyl phosphate. Essential for the maintenance of cellular ATP levels and carbohydrate metabolism. This Ginkgo biloba (Ginkgo) protein is Glyceraldehyde-3-phosphate dehydrogenase, cytosolic.